The sequence spans 322 residues: Malate dehydrogenase (322 aa).

NAD(+)-binding positions include 10–15 (GSGQIG) and Asp34. Residues Arg83 and Arg89 each coordinate substrate. NAD(+) contacts are provided by residues Asn96 and 119 to 121 (ITN). Positions 121 and 152 each coordinate substrate. The Proton acceptor role is filled by His176.

This sequence belongs to the LDH/MDH superfamily. MDH type 3 family.

It carries out the reaction (S)-malate + NAD(+) = oxaloacetate + NADH + H(+). Catalyzes the reversible oxidation of malate to oxaloacetate. This Bradyrhizobium sp. (strain ORS 278) protein is Malate dehydrogenase.